Reading from the N-terminus, the 372-residue chain is DNA double-strand break repair protein Mre11 (372 aa).

Mn(2+) contacts are provided by Asp8, His10, Asp49, and Asn84. Catalysis depends on His85, which acts as the Proton donor. Mn(2+)-binding residues include His161, His190, and His192.

The protein belongs to the MRE11/RAD32 family. Homodimer. Forms a heterotetramer composed of two Mre11 subunits and two Rad50 subunits. Mn(2+) serves as cofactor.

Its activity is regulated as follows. Nuclease activity is regulated by Rad50. Its function is as follows. Part of the Rad50/Mre11 complex, which is involved in the early steps of DNA double-strand break (DSB) repair. The complex may facilitate opening of the processed DNA ends to aid in the recruitment of HerA and NurA. Mre11 binds to DSB ends and has both double-stranded 3'-5' exonuclease activity and single-stranded endonuclease activity. The chain is DNA double-strand break repair protein Mre11 from Methanococcus maripaludis (strain DSM 14266 / JCM 13030 / NBRC 101832 / S2 / LL).